Reading from the N-terminus, the 614-residue chain is Serine/threonine-protein kinase Pkn1 (614 aa).

In terms of domain architecture, Protein kinase spans 13–276 (YKVIAELGHG…TSGEQLQVTL (264 aa)). ATP is bound by residues 19 to 27 (LGHGLWSRD) and Lys42.

It belongs to the protein kinase superfamily. Ser/Thr protein kinase family. Interacts with PknD, interacts with and phosphorylates IncG. Post-translationally, autophosphorylates on serine and threonine residues. Present in elementary bodies 40 hours post-infection as 2 proteins of approximately 70 and 65 kDa; the smaller one may be due to differential phosphorylation or degradation.

The enzyme catalyses L-seryl-[protein] + ATP = O-phospho-L-seryl-[protein] + ADP + H(+). The catalysed reaction is L-threonyl-[protein] + ATP = O-phospho-L-threonyl-[protein] + ADP + H(+). In terms of biological role, together with the serine/threonine kinase PknD, may play a role in specific interactions with host proteins during host intracellular growth. Autophosphorylates and phosphorylates IncG, an inclusion-membrane protein required for the modification of the nascent chlamydial inclusion. This Chlamydia trachomatis serovar L2 (strain ATCC VR-902B / DSM 19102 / 434/Bu) protein is Serine/threonine-protein kinase Pkn1 (pkn1).